The following is a 274-amino-acid chain: 2,3,4,5-tetrahydropyridine-2,6-dicarboxylate N-succinyltransferase (274 aa).

2 residues coordinate substrate: R104 and D141.

The protein belongs to the transferase hexapeptide repeat family. In terms of assembly, homotrimer.

The protein resides in the cytoplasm. The catalysed reaction is (S)-2,3,4,5-tetrahydrodipicolinate + succinyl-CoA + H2O = (S)-2-succinylamino-6-oxoheptanedioate + CoA. Its pathway is amino-acid biosynthesis; L-lysine biosynthesis via DAP pathway; LL-2,6-diaminopimelate from (S)-tetrahydrodipicolinate (succinylase route): step 1/3. This Shewanella amazonensis (strain ATCC BAA-1098 / SB2B) protein is 2,3,4,5-tetrahydropyridine-2,6-dicarboxylate N-succinyltransferase.